The chain runs to 277 residues: 14-3-3 protein (277 aa).

The tract at residues 252–277 (LQTQEQQQQPVGEGAEAPKVEATEQQ) is disordered. Positions 267–277 (EAPKVEATEQQ) are enriched in basic and acidic residues.

The protein belongs to the 14-3-3 family.

This chain is 14-3-3 protein, found in Eimeria tenella (Coccidian parasite).